The following is a 643-amino-acid chain: uncharacterized protein (643 aa).

Positions 179–199 are enriched in low complexity; that stretch reads FKSSQLQQSPSPNKKSPSYSQ. 2 disordered regions span residues 179–200 and 349–377; these read FKSSQLQQSPSPNKKSPSYSQV and KRSNSIDRAGIRSRRRSHSSPERSTSTEN.

This is an uncharacterized protein from Caenorhabditis elegans.